A 677-amino-acid chain; its full sequence is Threonine--tRNA ligase (677 aa).

The 59-residue stretch at 1 to 59 (MAQATISITVNGEAKEVEATTTGVELFAEDKNIIAVKINGENRDLYTPLNDGDTVDPIA) folds into the TGS domain. Residues 255–561 (DHRKLGAEMD…LLEHYAGAFP (307 aa)) are catalytic. Cys360, His411, and His538 together coordinate Zn(2+).

Belongs to the class-II aminoacyl-tRNA synthetase family. In terms of assembly, homodimer. Zn(2+) serves as cofactor.

It localises to the cytoplasm. It carries out the reaction tRNA(Thr) + L-threonine + ATP = L-threonyl-tRNA(Thr) + AMP + diphosphate + H(+). Catalyzes the attachment of threonine to tRNA(Thr) in a two-step reaction: L-threonine is first activated by ATP to form Thr-AMP and then transferred to the acceptor end of tRNA(Thr). Also edits incorrectly charged L-seryl-tRNA(Thr). The polypeptide is Threonine--tRNA ligase (Bifidobacterium longum (strain NCC 2705)).